Here is a 231-residue protein sequence, read N- to C-terminus: Protein OPG061 (231 aa).

It belongs to the orthopoxvirus OPG058 family.

It localises to the host nucleus. The protein localises to the host nucleolus. The sequence is that of Protein OPG061 (OPG061) from Cynomys gunnisoni (Gunnison's prairie dog).